Here is a 131-residue protein sequence, read N- to C-terminus: Leptin receptor overlapping transcript-like 1 (131 aa).

The next 4 helical transmembrane spans lie at 7-27, 32-52, 69-89, and 100-120; these read LISLSFGGAIGLMFLMLGCAL, QYWPLFVLFFYILSPIPYCIA, LAIFLTTGIVVSAFGLPVVFA, and ALVLTGNTVIFATILGFFLVF.

The protein belongs to the OB-RGRP/VPS55 family. As to quaternary structure, interacts with RAB13.

The protein resides in the membrane. In terms of biological role, negatively regulates growth hormone (GH) receptor cell surface expression in liver. May play a role in liver resistance to GH during periods of reduced nutrient availability. This chain is Leptin receptor overlapping transcript-like 1 (Leprotl1), found in Mus musculus (Mouse).